We begin with the raw amino-acid sequence, 191 residues long: dTTP/UTP pyrophosphatase (191 aa).

Asp71 acts as the Proton acceptor in catalysis.

The protein belongs to the Maf family. YhdE subfamily. The cofactor is a divalent metal cation.

It is found in the cytoplasm. The catalysed reaction is dTTP + H2O = dTMP + diphosphate + H(+). It carries out the reaction UTP + H2O = UMP + diphosphate + H(+). Nucleoside triphosphate pyrophosphatase that hydrolyzes dTTP and UTP. May have a dual role in cell division arrest and in preventing the incorporation of modified nucleotides into cellular nucleic acids. The polypeptide is dTTP/UTP pyrophosphatase (Geobacter sulfurreducens (strain ATCC 51573 / DSM 12127 / PCA)).